We begin with the raw amino-acid sequence, 701 residues long: Elongation factor G (701 aa).

The tr-type G domain occupies 8–290 (KRYRNIGICA…AVIEFLPAPD (283 aa)). Residues 17–24 (AHVDAGKT), 88–92 (DTPGH), and 142–145 (NKMD) each bind GTP.

This sequence belongs to the TRAFAC class translation factor GTPase superfamily. Classic translation factor GTPase family. EF-G/EF-2 subfamily.

The protein localises to the cytoplasm. Catalyzes the GTP-dependent ribosomal translocation step during translation elongation. During this step, the ribosome changes from the pre-translocational (PRE) to the post-translocational (POST) state as the newly formed A-site-bound peptidyl-tRNA and P-site-bound deacylated tRNA move to the P and E sites, respectively. Catalyzes the coordinated movement of the two tRNA molecules, the mRNA and conformational changes in the ribosome. The protein is Elongation factor G of Marinobacter nauticus (strain ATCC 700491 / DSM 11845 / VT8) (Marinobacter aquaeolei).